Consider the following 445-residue polypeptide: RING finger and transmembrane domain-containing protein 2 (445 aa).

Residues 1–183 (MWLLAAHQVL…LLAKLCFQHK (183 aa)) lie on the Extracellular side of the membrane. The disordered stretch occupies residues 12–41 (KMQRRHSSNTDNIPPERSRSQALSPEASVD). The helical transmembrane segment at 184–203 (LGIAVCIGMASTFAYANSTL) threads the bilayer. Over 204–215 (REQVSLKEKRSV) the chain is Cytoplasmic. A helical transmembrane segment spans residues 216-236 (LVILWILAFLAGNTMYVLYTF). Topologically, residues 237–256 (SSQQLYSSLIFLKPNLETLD) are extracellular. A helical membrane pass occupies residues 257-277 (FFDLLWIVGIADFVLKYITIA). The Cytoplasmic portion of the chain corresponds to 278 to 330 (LKCLIVALPKIILAVKSKGKFYLVIEELSQLFRSLVPIQLWYKYIMGDDSSNS). Residues 331 to 351 (YFLGGVLIVLYSLCKSFDICG) traverse the membrane as a helical segment. Residues 352–445 (RVGGLRKALK…GATSAHLQVY (94 aa)) lie on the Extracellular side of the membrane. Residues 385–423 (CAICQAEFRDPMILLCQHVFCEECLCLWLDRERTCPLCR) form an RING-type zinc finger.

Its subcellular location is the membrane. Its function is as follows. E3 ubiquitin-protein ligase that negatively regulates IL3-dependent cellular responses through IL3RA ubiquitination and degradation by the proteasome, having an anti-inflammatory effect. The protein is RING finger and transmembrane domain-containing protein 2 (Rnft2) of Mus musculus (Mouse).